Reading from the N-terminus, the 432-residue chain is Glutamyl-tRNA reductase (432 aa).

Substrate is bound by residues 49-52, Ser-109, 114-116, and Gln-120; these read TCNR and EGQ. The active-site Nucleophile is the Cys-50. 189-194 provides a ligand contact to NADP(+); that stretch reads GAGKMS.

It belongs to the glutamyl-tRNA reductase family. As to quaternary structure, homodimer.

Its subcellular location is the plastid. It is found in the cyanelle. It carries out the reaction (S)-4-amino-5-oxopentanoate + tRNA(Glu) + NADP(+) = L-glutamyl-tRNA(Glu) + NADPH + H(+). It functions in the pathway porphyrin-containing compound metabolism; protoporphyrin-IX biosynthesis; 5-aminolevulinate from L-glutamyl-tRNA(Glu): step 1/2. It participates in porphyrin-containing compound metabolism; chlorophyll biosynthesis. Its function is as follows. Catalyzes the NADPH-dependent reduction of glutamyl-tRNA(Glu) to glutamate 1-semialdehyde (GSA). The protein is Glutamyl-tRNA reductase of Cyanophora paradoxa.